A 364-amino-acid chain; its full sequence is D-alanine--D-alanine ligase (364 aa).

One can recognise an ATP-grasp domain in the interval 134–344 (KVLLKSFNIP…YESLVDKLIT (211 aa)). 167 to 222 (NNKLNYPVIVKPSVLGSSIGINVAYNVSQIEKYIEEAFEYDLTVVVEKFIKAREIE) is a binding site for ATP. Residues Asp297, Glu311, and Asn313 each contribute to the Mg(2+) site.

Belongs to the D-alanine--D-alanine ligase family. Mg(2+) is required as a cofactor. It depends on Mn(2+) as a cofactor.

The protein resides in the cytoplasm. The enzyme catalyses 2 D-alanine + ATP = D-alanyl-D-alanine + ADP + phosphate + H(+). It participates in cell wall biogenesis; peptidoglycan biosynthesis. Cell wall formation. The protein is D-alanine--D-alanine ligase of Borrelia duttonii (strain Ly).